A 317-amino-acid polypeptide reads, in one-letter code: MPVQGSQRRLLGSLNSTPTATPKLGLAANQTGAQCLEVSIPDGLFLSLGLVSLVENVLVVAAIARNRNLHSPMYCFICCLALSDLLVSGSNMLETAVILLLEAGALAARAAVVQQLDNVIDVITCSSMLSSLCFLGAIAMDRYISIFYALRYHSIVTLPRARGVVAAIWVASILFSTLFIAYYDHVAVLLCLVVFFLAMLVLMAVLYVHMLARACQHAQGIAQLHKRQRPAHQGVGLKGAATLTILLGIFFLCWGPFFLHLTLIVLCPQHPTCSCIFKNFNLFLALIICNAIIDPLIYAFRSQELRRTLKKVLLCSW.

Residues 1 to 37 (MPVQGSQRRLLGSLNSTPTATPKLGLAANQTGAQCLE) are Extracellular-facing. An N-linked (GlcNAc...) asparagine glycan is attached at N29. Residues 38-63 (VSIPDGLFLSLGLVSLVENVLVVAAI) traverse the membrane as a helical segment. Over 64–72 (ARNRNLHSP) the chain is Cytoplasmic. A helical transmembrane segment spans residues 73 to 93 (MYCFICCLALSDLLVSGSNML). Residues 94–118 (ETAVILLLEAGALAARAAVVQQLDN) are Extracellular-facing. A helical transmembrane segment spans residues 119–140 (VIDVITCSSMLSSLCFLGAIAM). Topologically, residues 141–163 (DRYISIFYALRYHSIVTLPRARG) are cytoplasmic. The chain crosses the membrane as a helical span at residues 164-183 (VVAAIWVASILFSTLFIAYY). Residues 184-191 (DHVAVLLC) lie on the Extracellular side of the membrane. A helical membrane pass occupies residues 192–211 (LVVFFLAMLVLMAVLYVHML). At 212 to 240 (ARACQHAQGIAQLHKRQRPAHQGVGLKGA) the chain is on the cytoplasmic side. The chain crosses the membrane as a helical span at residues 241-266 (ATLTILLGIFFLCWGPFFLHLTLIVL). The Extracellular portion of the chain corresponds to 267–279 (CPQHPTCSCIFKN). A helical transmembrane segment spans residues 280-300 (FNLFLALIICNAIIDPLIYAF). Residues 301–317 (RSQELRRTLKKVLLCSW) lie on the Cytoplasmic side of the membrane. C315 is lipidated: S-palmitoyl cysteine.

Belongs to the G-protein coupled receptor 1 family. As to quaternary structure, interacts with MGRN1, but does not undergo MGRN1-mediated ubiquitination; this interaction competes with GNAS-binding and thus inhibits agonist-induced cAMP production. Interacts with OPN3; the interaction results in a decrease in MC1R-mediated cAMP signaling and ultimately a decrease in melanin production in melanocytes.

It localises to the cell membrane. In terms of biological role, receptor for MSH (alpha, beta and gamma) and ACTH. The activity of this receptor is mediated by G proteins which activate adenylate cyclase. Mediates melanogenesis, the production of eumelanin (black/brown) and phaeomelanin (red/yellow), via regulation of cAMP signaling in melanocytes. The polypeptide is Melanocyte-stimulating hormone receptor (MC1R) (Presbytis comata (Grizzled leaf monkey)).